Consider the following 420-residue polypeptide: Maturation protein A2 (420 aa).

3 RNA-binding regions span residues 158–176 (IKYL…RAVK), 226–236 (QNRHDKIQRLL), and 294–298 (PVSDW).

The protein belongs to the Leviviricetes maturation protein family. In terms of assembly, interacts with host MurA; this interaction inhibits the first step in host cell wall synthesis. Interacts with the capsid protein.

It localises to the virion. In terms of biological role, induces host cell lysis. Inhibits host MurA activity thereby blocking the synthesis of murein precursors necessary for the host cell wall biosynthesis. May be responsible for the attachment to the host pilus. Makes extensive contacts with the viral genome. This chain is Maturation protein A2, found in Escherichia virus Qbeta (Bacteriophage Q-beta).